The sequence spans 690 residues: Protein AC23 (690 aa).

An N-terminal signal peptide occupies residues 1–37 (MLACKFSQYQAFIMDGVKLLGTCALIILLSTTSTVVG).

Its subcellular location is the virion. Pathogenicity factor that accelerates mortality in the host insect. This Autographa californica nuclear polyhedrosis virus (AcMNPV) protein is Protein AC23.